The chain runs to 353 residues: D-glycerol 3-phosphate phosphatase (353 aa).

The active-site Nucleophile is the Asp14. Mg(2+)-binding residues include Asp14, Asp16, and Asp209. Asp16 acts as the Proton donor in catalysis.

The protein belongs to the HAD-like hydrolase superfamily. In terms of assembly, homodimer. It depends on Mg(2+) as a cofactor. Co(2+) serves as cofactor. The cofactor is Mn(2+).

The catalysed reaction is sn-glycerol 1-phosphate + H2O = glycerol + phosphate. It participates in glycerolipid metabolism. Dephosphorylates D-glycerol 3-phosphate (sn-glycerol 1-phosphate). Is the final enzyme involved in the recycling/catabolism of glycerophospholipid polar heads. To a lesser extent, is also able to act on glycerol 2-phosphate and D-ribulose 5-phosphate, but cannot use D-glyceraldehyde 3-phosphate, dihydroxyacetone-phosphate, UMP or GMP as substrates. This is D-glycerol 3-phosphate phosphatase from Mycobacterium tuberculosis (strain ATCC 25618 / H37Rv).